We begin with the raw amino-acid sequence, 204 residues long: MKKQEQNQFLKEFGISLIKMFPKYIDKAIYSKGELTLHVKPTNLIALMKILKNHTNCQFKSLSDLCAVDFPEKKERFEIVYNLLSVRYNSRIRVKTFVDELTPVPSVTCLFQAAGWFEREVWDLFGVYFTNHPDLRRILTDYGFEGHPMRKDFPLTGYVEVRYDDEQKRVVTESLEMTQEFRSFNFTSPWEQIEISKPNIKEKK.

It belongs to the complex I 30 kDa subunit family. In terms of assembly, complex I is composed of about 30 different subunits.

Its subcellular location is the mitochondrion inner membrane. The enzyme catalyses a ubiquinone + NADH + 5 H(+)(in) = a ubiquinol + NAD(+) + 4 H(+)(out). In terms of biological role, core subunit of the mitochondrial membrane respiratory chain NADH dehydrogenase (Complex I) that is believed to belong to the minimal assembly required for catalysis. Complex I functions in the transfer of electrons from NADH to the respiratory chain. The immediate electron acceptor for the enzyme is believed to be ubiquinone. In Reclinomonas americana, this protein is NADH-ubiquinone oxidoreductase subunit 9 (NAD9).